We begin with the raw amino-acid sequence, 260 residues long: Triosephosphate isomerase (260 aa).

Substrate is bound at residue 11–13 (NWK). The active-site Electrophile is His-103. The Proton acceptor role is filled by Glu-175. Substrate contacts are provided by residues Gly-181, Ser-220, and 241–242 (GG).

The protein belongs to the triosephosphate isomerase family. Homodimer.

The protein localises to the cytoplasm. The enzyme catalyses D-glyceraldehyde 3-phosphate = dihydroxyacetone phosphate. Its pathway is carbohydrate biosynthesis; gluconeogenesis. It functions in the pathway carbohydrate degradation; glycolysis; D-glyceraldehyde 3-phosphate from glycerone phosphate: step 1/1. In terms of biological role, involved in the gluconeogenesis. Catalyzes stereospecifically the conversion of dihydroxyacetone phosphate (DHAP) to D-glyceraldehyde-3-phosphate (G3P). This is Triosephosphate isomerase from Shewanella pealeana (strain ATCC 700345 / ANG-SQ1).